Here is a 111-residue protein sequence, read N- to C-terminus: Ribonuclease P protein component (111 aa).

It belongs to the RnpA family. Consists of a catalytic RNA component (M1 or rnpB) and a protein subunit.

It carries out the reaction Endonucleolytic cleavage of RNA, removing 5'-extranucleotides from tRNA precursor.. Functionally, RNaseP catalyzes the removal of the 5'-leader sequence from pre-tRNA to produce the mature 5'-terminus. It can also cleave other RNA substrates such as 4.5S RNA. The protein component plays an auxiliary but essential role in vivo by binding to the 5'-leader sequence and broadening the substrate specificity of the ribozyme. The protein is Ribonuclease P protein component of Clostridium botulinum (strain Okra / Type B1).